Reading from the N-terminus, the 21-residue chain is Testis ecdysiotropin peptide 1 (21 aa).

The tract at residues Ile-1–Phe-21 is disordered.

Its function is as follows. Start or boost ecdysteroid synthesis in testis of larvae and pupae. This Lymantria dispar (Gypsy moth) protein is Testis ecdysiotropin peptide 1.